The sequence spans 126 residues: Large ribosomal subunit protein bL12 (126 aa).

The protein belongs to the bacterial ribosomal protein bL12 family. As to quaternary structure, homodimer. Part of the ribosomal stalk of the 50S ribosomal subunit. Forms a multimeric L10(L12)X complex, where L10 forms an elongated spine to which 2 to 4 L12 dimers bind in a sequential fashion. Binds GTP-bound translation factors.

Its function is as follows. Forms part of the ribosomal stalk which helps the ribosome interact with GTP-bound translation factors. Is thus essential for accurate translation. The chain is Large ribosomal subunit protein bL12 from Prosthecochloris aestuarii (strain DSM 271 / SK 413).